Here is a 777-residue protein sequence, read N- to C-terminus: Shutoff protein (777 aa).

Disordered stretches follow at residues 1–55 and 261–283; these read MEED…SVPV and PLDS…DDDL. Residues 9–20 show a composition bias toward polar residues; that stretch reads QPDSETLTSPTS. A binding to host EIF4G region spans residues 250–314; the sequence is VMDHLLIKRV…VILVTVELEC (65 aa). In terms of domain architecture, RRM spans 317 to 435; it reads RFFANPQTLR…ELWTAFSERT (119 aa). Phosphotyrosine; by host occurs at positions 334 and 649. Positions 652–777 are disordered; the sequence is PQTGEELNTP…AAARLVESQP (126 aa). Polar residues predominate over residues 656-665; it reads EELNTPSPSA. The span at 728 to 738 shows a compositional bias: gly residues; the sequence is GAGGQTPQGRG. The segment covering 753–763 has biased composition (basic and acidic residues); sequence TRSEPASDGES.

This sequence belongs to the adenoviridae shutoff protein family. Monomer. Interacts with hexon protein; this interaction allows chaperoning and trimerization of hexon proteins. Interacts (via N-terminus) with host initiation factor EIF4G (via C-terminus). Interacts (via RRM domain) with viral mRNAs that contain the tripartite leader; this interaction allows ribosome shunting and expression of viral late mRNAs. Might be cleaved by the viral protease. In terms of processing, phosphorylated. Tyrosine phosphorylation enhances preferential binding to tripartite leader mRNAs and allows ribosome shunting. Post-translationally, methylated. Asymmetric dimethylation by host PRMT1 of the Arg/Gly-rich region may regulate shutoff protein binding to hexon and promote the capsid assembly in the nucleus.

Its subcellular location is the host cytoplasm. Functionally, protein that inhibits host translation while promoting late viral translation by ribosome shunting. Blocks host cap-dependent translation by binding to eIF4G, displacing MKNK1 from cap initiation complexes and preventing EIF4E phosphorylation. Binds to the tripartite leader sequence of viral late mRNAs and recruits host eIF4G, PABPC1/poly-A binding protein and 40S ribosomes subunits on viral mRNAs, allowing ribosome shunting and efficient translation of late viral mRNAs even though conventional translation via ribosome scanning from the cap has been shut off in the host cell. During assembly, acts as a chaperone protein that helps hexon proteins assembly into trimers. This Homo sapiens (Human) protein is Shutoff protein.